A 346-amino-acid polypeptide reads, in one-letter code: Putative D-threonate 4-phosphate dehydrogenase (346 aa).

Positions 141 and 142 each coordinate substrate. Residues histidine 171, histidine 215, and histidine 270 each coordinate a divalent metal cation. 2 residues coordinate substrate: lysine 278 and arginine 296.

The protein belongs to the PdxA family. PdxA2 subfamily. As to quaternary structure, homodimer. The cofactor is a divalent metal cation.

It catalyses the reaction 4-O-phospho-D-threonate + NAD(+) = dihydroxyacetone phosphate + CO2 + NADH. Its function is as follows. Catalyzes the NAD-dependent oxidation and subsequent decarboxylation of D-threonate 4-phosphate to produce dihydroxyacetone phosphate (DHAP). The chain is Putative D-threonate 4-phosphate dehydrogenase from Cutibacterium acnes (strain DSM 16379 / KPA171202) (Propionibacterium acnes).